The following is a 534-amino-acid chain: Arginine transporter 1 (534 aa).

Helical transmembrane passes span 35–55 (YVLL…YFGW), 99–119 (SLFT…GYLL), 126–146 (AVAL…AFSG), 154–174 (PAFV…LLIV), 182–202 (ALIM…PLVL), and 216–236 (VCIG…FFFI). N246 carries N-linked (GlcNAc...) asparagine glycosylation. The segment at 261–302 (TAQSSPKAVDSPPCDEGASSRGRLAVSHNTERTAPDDEQEKD) is disordered. A compositionally biased stretch (basic and acidic residues) spans 289–302 (NTERTAPDDEQEKD). The next 6 membrane-spanning stretches (helical) occupy residues 329–349 (AFTF…WVMA), 365–385 (YTLE…GVVI), 388–408 (IGIM…YVCV), 419–439 (FSVI…YVFV), 451–471 (LIGV…VLYG), and 483–503 (RPVV…LLAM).

The protein belongs to the SLC43A transporter (TC 2.A.1.44) family.

It localises to the cell membrane. The enzyme catalyses L-arginine(in) = L-arginine(out). Its function is as follows. Selective L-arginine transporter that is essential for parasite survival and virulence. Does not require other inorganic ions such as sodium, chloride, potassium or calcium. This Toxoplasma gondii (strain ATCC 50611 / Me49) protein is Arginine transporter 1.